A 109-amino-acid chain; its full sequence is UPF0060 membrane protein YfjF (109 aa).

4 helical membrane-spanning segments follow: residues 6–26 (ILLF…VWLW), 32–52 (PAGY…LPTF), 61–81 (VYAA…WLVD), and 87–107 (LYDW…LFAP).

It belongs to the UPF0060 family.

It is found in the cell membrane. This is UPF0060 membrane protein YfjF (yfjF) from Bacillus subtilis (strain 168).